We begin with the raw amino-acid sequence, 106 residues long: Large ribosomal subunit protein eL42 (106 aa).

It belongs to the eukaryotic ribosomal protein eL42 family.

This chain is Large ribosomal subunit protein eL42 (RPL44), found in Wickerhamomyces ciferrii (strain ATCC 14091 / BCRC 22168 / CBS 111 / JCM 3599 / NBRC 0793 / NRRL Y-1031 F-60-10) (Yeast).